Reading from the N-terminus, the 109-residue chain is Large ribosomal subunit protein uL24 (109 aa).

This sequence belongs to the universal ribosomal protein uL24 family. Part of the 50S ribosomal subunit.

Functionally, one of two assembly initiator proteins, it binds directly to the 5'-end of the 23S rRNA, where it nucleates assembly of the 50S subunit. Its function is as follows. One of the proteins that surrounds the polypeptide exit tunnel on the outside of the subunit. The polypeptide is Large ribosomal subunit protein uL24 (Rickettsia rickettsii (strain Iowa)).